Consider the following 302-residue polypeptide: Aspartate carbamoyltransferase catalytic subunit (302 aa).

Residues Arg-54 and Thr-55 each contribute to the carbamoyl phosphate site. L-aspartate is bound at residue Lys-82. The carbamoyl phosphate site is built by Arg-104, His-132, and Gln-135. Positions 165 and 217 each coordinate L-aspartate. Residues Gly-257 and Pro-258 each contribute to the carbamoyl phosphate site.

The protein belongs to the aspartate/ornithine carbamoyltransferase superfamily. ATCase family. In terms of assembly, heterododecamer (2C3:3R2) of six catalytic PyrB chains organized as two trimers (C3), and six regulatory PyrI chains organized as three dimers (R2).

It carries out the reaction carbamoyl phosphate + L-aspartate = N-carbamoyl-L-aspartate + phosphate + H(+). Its pathway is pyrimidine metabolism; UMP biosynthesis via de novo pathway; (S)-dihydroorotate from bicarbonate: step 2/3. Functionally, catalyzes the condensation of carbamoyl phosphate and aspartate to form carbamoyl aspartate and inorganic phosphate, the committed step in the de novo pyrimidine nucleotide biosynthesis pathway. This Thermus thermophilus (strain ATCC BAA-163 / DSM 7039 / HB27) protein is Aspartate carbamoyltransferase catalytic subunit.